Here is a 410-residue protein sequence, read N- to C-terminus: Interleukin-1 receptor type 2 (410 aa).

An N-terminal signal peptide occupies residues 1–13 (MFILLVLVTGVSA). Over 14–355 (FTTPTVVHTG…SQSLHTTVKE (342 aa)) the chain is Extracellular. Ig-like C2-type domains are found at residues 35–136 (PTVH…VELK), 146–237 (PHVS…RNIE), and 249–357 (PVII…KEVS). 3 disulfides stabilise this stretch: Cys-42-Cys-128, Cys-64-Cys-120, and Cys-164-Cys-219. Asn-124, Asn-208, Asn-231, and Asn-289 each carry an N-linked (GlcNAc...) asparagine glycan. An intrachain disulfide couples Cys-270 to Cys-338. Residues 356–381 (VSSTFSWSIALAPLSLIILVVGAIWM) form a helical membrane-spanning segment. The Cytoplasmic segment spans residues 382–410 (RRRCKRRAGKTYGLTKLRTDNQDFPSSPN).

Belongs to the interleukin-1 receptor family. As to quaternary structure, associates with IL1RAP to form a non-signaling interleukin-1 receptor complex. Post-translationally, a soluble form (sIL1R2) can also be produced by proteolytic cleavage at the cell surface (shedding) involving a metalloproteinase. As to expression, strongly expressed in B-cells, with levels 21 times higher than IL1R1. In T-cells expressed 5 times more compared with IL1R1.

The protein resides in the membrane. It localises to the cell membrane. The protein localises to the secreted. Functionally, non-signaling receptor for IL1A, IL1B and IL1RN. Reduces IL1B activities. Serves as a decoy receptor by competitive binding to IL1B and preventing its binding to IL1R1. Also modulates cellular response through non-signaling association with IL1RAP after binding to IL1B. IL1R2 (membrane and secreted forms) preferentially binds IL1B and poorly IL1A and IL1RN. The secreted IL1R2 recruits secreted IL1RAP with high affinity; this complex formation may be the dominant mechanism for neutralization of IL1B by secreted/soluble receptors. The sequence is that of Interleukin-1 receptor type 2 (Il1r2) from Mus musculus (Mouse).